The following is a 411-amino-acid chain: Serine--tRNA ligase (411 aa).

226–228 (TSE) provides a ligand contact to L-serine. 257–259 (RKE) contacts ATP. Glutamate 280 contributes to the L-serine binding site. ATP is bound at residue 344 to 347 (EISS). Serine 379 serves as a coordination point for L-serine.

The protein belongs to the class-II aminoacyl-tRNA synthetase family. Type-1 seryl-tRNA synthetase subfamily. As to quaternary structure, homodimer. The tRNA molecule binds across the dimer.

It localises to the cytoplasm. It carries out the reaction tRNA(Ser) + L-serine + ATP = L-seryl-tRNA(Ser) + AMP + diphosphate + H(+). The enzyme catalyses tRNA(Sec) + L-serine + ATP = L-seryl-tRNA(Sec) + AMP + diphosphate + H(+). It participates in aminoacyl-tRNA biosynthesis; selenocysteinyl-tRNA(Sec) biosynthesis; L-seryl-tRNA(Sec) from L-serine and tRNA(Sec): step 1/1. Its function is as follows. Catalyzes the attachment of serine to tRNA(Ser). Is also able to aminoacylate tRNA(Sec) with serine, to form the misacylated tRNA L-seryl-tRNA(Sec), which will be further converted into selenocysteinyl-tRNA(Sec). This is Serine--tRNA ligase from Campylobacter jejuni subsp. jejuni serotype O:2 (strain ATCC 700819 / NCTC 11168).